The sequence spans 283 residues: Pantothenate synthetase (283 aa).

31-38 (MGALHDGH) contributes to the ATP binding site. His-38 serves as the catalytic Proton donor. Gln-62 serves as a coordination point for (R)-pantoate. A beta-alanine-binding site is contributed by Gln-62. 148–151 (GKKD) is a binding site for ATP. Residue Gln-154 participates in (R)-pantoate binding. Residues Val-177 and 185-188 (KSSR) each bind ATP.

It belongs to the pantothenate synthetase family. As to quaternary structure, homodimer.

It is found in the cytoplasm. It catalyses the reaction (R)-pantoate + beta-alanine + ATP = (R)-pantothenate + AMP + diphosphate + H(+). It functions in the pathway cofactor biosynthesis; (R)-pantothenate biosynthesis; (R)-pantothenate from (R)-pantoate and beta-alanine: step 1/1. Its function is as follows. Catalyzes the condensation of pantoate with beta-alanine in an ATP-dependent reaction via a pantoyl-adenylate intermediate. This is Pantothenate synthetase from Staphylococcus aureus (strain MRSA252).